We begin with the raw amino-acid sequence, 378 residues long: Lipoyl synthase, mitochondrial (378 aa).

Residues Cys-97, Cys-102, Cys-108, Cys-128, Cys-132, Cys-135, and Ser-343 each contribute to the [4Fe-4S] cluster site. One can recognise a Radical SAM core domain in the interval 111–332 (GSDKSAATAT…RQRALDMGFL (222 aa)).

It belongs to the radical SAM superfamily. Lipoyl synthase family. [4Fe-4S] cluster serves as cofactor.

It is found in the mitochondrion. It catalyses the reaction [[Fe-S] cluster scaffold protein carrying a second [4Fe-4S](2+) cluster] + N(6)-octanoyl-L-lysyl-[protein] + 2 oxidized [2Fe-2S]-[ferredoxin] + 2 S-adenosyl-L-methionine + 4 H(+) = [[Fe-S] cluster scaffold protein] + N(6)-[(R)-dihydrolipoyl]-L-lysyl-[protein] + 4 Fe(3+) + 2 hydrogen sulfide + 2 5'-deoxyadenosine + 2 L-methionine + 2 reduced [2Fe-2S]-[ferredoxin]. Its pathway is protein modification; protein lipoylation via endogenous pathway; protein N(6)-(lipoyl)lysine from octanoyl-[acyl-carrier-protein]: step 2/2. Its function is as follows. Catalyzes the radical-mediated insertion of two sulfur atoms into the C-6 and C-8 positions of the octanoyl moiety bound to the lipoyl domains of lipoate-dependent enzymes, thereby converting the octanoylated domains into lipoylated derivatives. The polypeptide is Lipoyl synthase, mitochondrial (Phaeosphaeria nodorum (strain SN15 / ATCC MYA-4574 / FGSC 10173) (Glume blotch fungus)).